Reading from the N-terminus, the 2715-residue chain is Chromodomain-helicase-DNA-binding protein 6 (2715 aa).

The span at 1 to 11 (MKMKIQKKEKQ) shows a compositional bias: basic and acidic residues. Disordered stretches follow at residues 1 to 30 (MKMKIQKKEKQLSNLKVLNHSPMSDASVNF) and 66 to 244 (EEAA…QVKR). Residues 1–747 (MKMKIQKKEK…MMELRKCCNH (747 aa)) form a required for DNA-dependent ATPase activity region. The segment covering 12–27 (LSNLKVLNHSPMSDAS) has biased composition (polar residues). Over residues 123-172 (EPKEPKEPRKAKEPKKAKEHKEPKQKDGAKKARKPREASGTKEAKEKRSC) the composition is skewed to basic and acidic residues. Chromo domains are found at residues 292 to 343 (NIIE…KDPR) and 375 to 439 (VEVD…KHVE). In terms of domain architecture, Helicase ATP-binding spans 473–647 (LFNWYNRKNC…FSLLNFLEPS (175 aa)). 486-493 (DEMGLGKT) lines the ATP pocket. The DEAH box signature appears at 598-601 (DEAH). The region spanning 787 to 956 (LIDKLLPKLI…LSKMEVEDLL (170 aa)) is the Helicase C-terminal domain. Residues 1318–1390 (KSLSAEQGVT…SDPDKSPWPV (73 aa)) form a disordered region. The span at 1321–1330 (SAEQGVTDGT) shows a compositional bias: polar residues. Composition is skewed to basic and acidic residues over residues 1333–1351 (IPERGNTDKEDNAEDKVDG) and 1367–1376 (FSEKKDDSRA). In terms of domain architecture, Myb-like spans 1449 to 1503 (RWTRREQADFYRTVSSFGVVYDQEKKTFDWTQFRIISRLDKKSDESLEQYFYSFV). Positions 2027 to 2038 (FENKDDYDRDGN) are enriched in basic and acidic residues. 6 disordered regions span residues 2027–2063 (FENKDDYDRDGNCHSQDYPGKYSEEESKSSTSGITGD), 2116–2148 (SQQYEPSGTLPTPVLTSSAGSRTSLSEPEAAEH), 2321–2351 (QATLSTTHPEGPGPATSAPEPATAASSQAEK), 2373–2422 (PGFG…FLPE), 2547–2602 (TSTA…PAIT), and 2648–2715 (VGLE…NDTN). Over residues 2116–2141 (SQQYEPSGTLPTPVLTSSAGSRTSLS) the composition is skewed to polar residues. Positions 2329–2346 (PEGPGPATSAPEPATAAS) are enriched in low complexity. Over residues 2547–2560 (TSTAPASLSSTTKS) the composition is skewed to low complexity. Composition is skewed to basic and acidic residues over residues 2567–2588 (KTAEDKPSSHDVKTDTLAEDKP) and 2706–2715 (ALKDSNNDTN).

The protein belongs to the SNF2/RAD54 helicase family. As to quaternary structure, interacts with NFE2L2; involved in activation of the transcription. In terms of assembly, (Microbial infection) Interacts with the influenza A polymerase complex composed fo PB1, PB2 and PA. (Microbial infection) Interacts (via N-terminus) with human papillomavirus protein E8^E2C (via C-terminus); this interaction induces transcriptional repression of the viral genome. As to expression, widely expressed.

The protein localises to the nucleus. It localises to the nucleoplasm. It catalyses the reaction ATP + H2O = ADP + phosphate + H(+). Functionally, ATP-dependent chromatin-remodeling factor. Regulates transcription by disrupting nucleosomes in a largely non-sliding manner which strongly increases the accessibility of chromatin; nucleosome disruption requires ATP. Activates transcription of specific genes in response to oxidative stress through interaction with NFE2L2. Its function is as follows. (Microbial infection) Acts as a transcriptional repressor of different viruses including influenza virus or papillomavirus. During influenza virus infection, the viral polymerase complex localizes CHD6 to inactive chromatin where it gets degraded in a proteasome independent-manner. In Homo sapiens (Human), this protein is Chromodomain-helicase-DNA-binding protein 6 (CHD6).